The following is a 293-amino-acid chain: Undecaprenyl-diphosphatase (293 aa).

The next 8 helical transmembrane spans lie at 3–23 (IALALKAVILGIVEGLTEFLP), 43–63 (KGKIFEIVIQFGAILAVCWEF), 85–105 (ANVVIASVPAIVLAFIFGKWI), 109–129 (LFNPISVALAFIVGGVVILLA), 178–198 (FALVPGTSRSGATIIGGMLFG), 203–223 (VATEFSFFLAIPVIFGATVYE), 238–258 (IFAVGFVFAFLSAFLCVRWLL), and 269–289 (FAWYRIAFGIVVLLTAYSGLV).

Belongs to the UppP family.

Its subcellular location is the cell inner membrane. It catalyses the reaction di-trans,octa-cis-undecaprenyl diphosphate + H2O = di-trans,octa-cis-undecaprenyl phosphate + phosphate + H(+). Catalyzes the dephosphorylation of undecaprenyl diphosphate (UPP). Confers resistance to bacitracin. In Cupriavidus necator (strain ATCC 17699 / DSM 428 / KCTC 22496 / NCIMB 10442 / H16 / Stanier 337) (Ralstonia eutropha), this protein is Undecaprenyl-diphosphatase.